The primary structure comprises 506 residues: GMP synthase [glutamine-hydrolyzing] (506 aa).

Positions 4–192 (KLIILDFGSQ…FLDICGMKRD (189 aa)) constitute a Glutamine amidotransferase type-1 domain. Cys-79 serves as the catalytic Nucleophile. Residues His-167 and Glu-169 contribute to the active site. The region spanning 193–381 (WTPASFIEAT…LGMMPHLIHR (189 aa)) is the GMPS ATP-PPase domain. An ATP-binding site is contributed by 220–226 (SGGVDSS).

In terms of assembly, homodimer.

It catalyses the reaction XMP + L-glutamine + ATP + H2O = GMP + L-glutamate + AMP + diphosphate + 2 H(+). Its pathway is purine metabolism; GMP biosynthesis; GMP from XMP (L-Gln route): step 1/1. Functionally, catalyzes the synthesis of GMP from XMP. This Porphyromonas gingivalis (strain ATCC BAA-308 / W83) protein is GMP synthase [glutamine-hydrolyzing].